The primary structure comprises 135 residues: Large ribosomal subunit protein uL16c (135 aa).

The protein belongs to the universal ribosomal protein uL16 family. Part of the 50S ribosomal subunit.

It localises to the plastid. The protein localises to the chloroplast. This Gossypium hirsutum (Upland cotton) protein is Large ribosomal subunit protein uL16c.